The primary structure comprises 336 residues: Large ribosomal subunit protein uL1m (336 aa).

Residues 1-50 constitute a mitochondrion transit peptide; it reads MAAAVRCLRRVLIHHQRHCLCKMASQASLYPCSVNSLLHNRHFAAAAAAA. Residue S85 is modified to Phosphoserine.

Belongs to the universal ribosomal protein uL1 family.

It localises to the mitochondrion. This chain is Large ribosomal subunit protein uL1m (Mrpl1), found in Mus musculus (Mouse).